A 299-amino-acid chain; its full sequence is Glycine--tRNA ligase alpha subunit (299 aa).

Belongs to the class-II aminoacyl-tRNA synthetase family. As to quaternary structure, tetramer of two alpha and two beta subunits.

It localises to the cytoplasm. It catalyses the reaction tRNA(Gly) + glycine + ATP = glycyl-tRNA(Gly) + AMP + diphosphate. The protein is Glycine--tRNA ligase alpha subunit of Caulobacter vibrioides (strain ATCC 19089 / CIP 103742 / CB 15) (Caulobacter crescentus).